The following is an 85-amino-acid chain: Large ribosomal subunit protein bL27 (85 aa).

Positions 1-22 (MAHKKAGGSTNNGRDSESKRLG) are disordered.

Belongs to the bacterial ribosomal protein bL27 family.

This is Large ribosomal subunit protein bL27 from Photobacterium profundum (strain SS9).